Reading from the N-terminus, the 344-residue chain is L-rhamnose-proton symporter (344 aa).

The next 10 helical transmembrane spans lie at 4 to 24 (AITM…CFYA), 38 to 58 (WSVG…AILL), 72 to 92 (TLLP…NYGL), 101 to 121 (MGIG…TPIL), 137 to 157 (TLLG…AGQL), 175 to 195 (LVLA…MNAA), 214 to 234 (LPSY…FCFI), 259 to 279 (VLLS…YAWG), 290 to 310 (MSWM…GLVL), and 321 to 341 (VGVL…VGLG).

The protein belongs to the L-rhamnose transporter (TC 2.A.7.6) family.

It localises to the cell inner membrane. The catalysed reaction is L-rhamnopyranose(in) + H(+)(in) = L-rhamnopyranose(out) + H(+)(out). Its function is as follows. Uptake of L-rhamnose across the cytoplasmic membrane with the concomitant transport of protons into the cell (symport system). This is L-rhamnose-proton symporter from Enterobacter sp. (strain 638).